The following is a 519-amino-acid chain: Na(+)/H(+) exchange regulatory cofactor NHE-RF3 (519 aa).

3 PDZ domains span residues 9 to 90, 134 to 215, and 243 to 323; these read ECKL…LDGD, RLCY…VDKE, and IVEM…VDKE. Serine 148, serine 192, serine 250, serine 334, and serine 348 each carry phosphoserine. A disordered region spans residues 347 to 374; sequence GSVKEAPAPTPTSLEVSSPPDTTEEVDH. The span at 357 to 367 shows a compositional bias: polar residues; the sequence is PTSLEVSSPPD. Residues 378-458 form the PDZ 4 domain; the sequence is LCRLAKGENG…NVTLLVCGKK (81 aa). The residue at position 451 (threonine 451) is a Phosphothreonine. The disordered stretch occupies residues 473–519; sequence SLADPPDTPPDSKEGIVVESKHDSHMAKERAHSTASHSSSNSEDTEM. Over residues 482 to 504 the composition is skewed to basic and acidic residues; that stretch reads PDSKEGIVVESKHDSHMAKERAH. Phosphoserine occurs at positions 492, 508, 510, 511, 512, and 514. Residues 505–519 show a composition bias toward low complexity; sequence STASHSSSNSEDTEM.

The protein belongs to the NHER family. In terms of assembly, interacts with PDZK1IP1 and ABCC2. Binds to the C-terminal region of SLC26A3. Interacts (via PDZ domains 1 and 3) with SCARB1 (C-terminal domain). Forms a heterodimeric complex with NHERF1. Interacts with AKAP2, BCR, CFTR, SLCO1A1, SLC22A12, SLC22A4, SLC22A5, NHERF2 and SLC17A1. Component of a complex, composed of PDZK1, SYNGAP1, KLHL17 and NMDA receptors. Interacts (via PDZ1 domain) directly with KLHL17; the interaction is important for integrity of actin cytoskeleton structures in neurons. Interacts (via C-terminal PDZ domain) with SLC26A6 (via C-terminal domain). Interacts (via C-terminal PDZ domain) with SLC9A3 (via C-terminal domain). Interacts (via the first PDZ domain) with PTGIR (via non-isoprenylated C-terminus). Interacts (via PDZ domains 1 and 3) with SLC5A8 (via PDZ-binding motif); interaction increases nicotinate transport activity of SLC5A8.

The protein resides in the membrane. Its subcellular location is the cell membrane. A scaffold protein that connects plasma membrane proteins and regulatory components, regulating their surface expression in epithelial cells apical domains. May be involved in the coordination of a diverse range of regulatory processes for ion transport and second messenger cascades. In complex with NHERF1, may cluster proteins that are functionally dependent in a mutual fashion and modulate the trafficking and the activity of the associated membrane proteins. May play a role in the cellular mechanisms associated with multidrug resistance through its interaction with ABCC2 and PDZK1IP1. May potentiate the CFTR chloride channel activity. Required for normal cell-surface expression of SCARB1. Plays a role in maintaining normal plasma cholesterol levels via its effects on SCARB1. Plays a role in the normal localization and function of the chloride-anion exchanger SLC26A6 to the plasma membrane in the brush border of the proximal tubule of the kidney. May be involved in the regulation of proximal tubular Na(+)-dependent inorganic phosphate cotransport therefore playing an important role in tubule function. In Pongo abelii (Sumatran orangutan), this protein is Na(+)/H(+) exchange regulatory cofactor NHE-RF3 (PDZK1).